The sequence spans 787 residues: Protein FAM149A (787 aa).

Disordered stretches follow at residues 22–105 (SPAV…SSGA), 144–175 (GSNS…APGP), 189–226 (EEWT…PTNF), 238–284 (ASES…SWRD), 432–455 (DGDE…GLPP), 573–602 (LQQR…ASSR), and 665–697 (AVQT…SYRG). The segment covering 37-46 (SVDSGASTSL) has biased composition (polar residues). Low complexity-rich tracts occupy residues 51-65 (TLTL…TAAS) and 96-105 (SGSLPSSSGA). A compositionally biased stretch (polar residues) spans 144-155 (GSNSVTASSPRN). Residues 189 to 200 (EEWTSDSDSQDD) are compositionally biased toward acidic residues. The span at 201-220 (PEGRGLSEGLRKQSSEKSKD) shows a compositional bias: basic and acidic residues. Low complexity predominate over residues 239-250 (SESPSSFSSSGS). Residues 251-261 (RTPTEAHNSWP) are compositionally biased toward polar residues. The segment covering 262 to 274 (GSSTQSSTTGLST) has biased composition (low complexity).

It belongs to the FAM149 family.

The protein is Protein FAM149A (Fam149a) of Mus musculus (Mouse).